Reading from the N-terminus, the 435-residue chain is NADH-quinone oxidoreductase subunit D (435 aa).

Belongs to the complex I 49 kDa subunit family. As to quaternary structure, NDH-1 is composed of 14 different subunits. Subunits NuoB, C, D, E, F, and G constitute the peripheral sector of the complex.

It is found in the cell inner membrane. It catalyses the reaction a quinone + NADH + 5 H(+)(in) = a quinol + NAD(+) + 4 H(+)(out). In terms of biological role, NDH-1 shuttles electrons from NADH, via FMN and iron-sulfur (Fe-S) centers, to quinones in the respiratory chain. The immediate electron acceptor for the enzyme in this species is believed to be ubiquinone. Couples the redox reaction to proton translocation (for every two electrons transferred, four hydrogen ions are translocated across the cytoplasmic membrane), and thus conserves the redox energy in a proton gradient. This chain is NADH-quinone oxidoreductase subunit D, found in Xylella fastidiosa (strain M23).